Consider the following 282-residue polypeptide: TPR repeat protein oca3 (282 aa).

4 TPR repeats span residues 16-50, 71-104, 139-172, and 174-211; these read IVAL…ALTT, PRVE…DPTH, LEAW…QPFE, and RLFA…CEEY.

The protein resides in the cytoplasm. The protein localises to the nucleus. In terms of biological role, may be involved in cell cycle regulation. The polypeptide is TPR repeat protein oca3 (oca3) (Schizosaccharomyces pombe (strain 972 / ATCC 24843) (Fission yeast)).